The chain runs to 322 residues: Ribonuclease Z (322 aa).

Residues His-60, His-62, Asp-64, His-65, His-140, Asp-210, and His-270 each coordinate Zn(2+). The active-site Proton acceptor is the Asp-64.

The protein belongs to the RNase Z family. In terms of assembly, homodimer. Requires Zn(2+) as cofactor.

The enzyme catalyses Endonucleolytic cleavage of RNA, removing extra 3' nucleotides from tRNA precursor, generating 3' termini of tRNAs. A 3'-hydroxy group is left at the tRNA terminus and a 5'-phosphoryl group is left at the trailer molecule.. In terms of biological role, zinc phosphodiesterase, which displays some tRNA 3'-processing endonuclease activity. Probably involved in tRNA maturation, by removing a 3'-trailer from precursor tRNA. In Methanococcus aeolicus (strain ATCC BAA-1280 / DSM 17508 / OCM 812 / Nankai-3), this protein is Ribonuclease Z.